A 317-amino-acid polypeptide reads, in one-letter code: Aspartate carbamoyltransferase catalytic subunit (317 aa).

The carbamoyl phosphate site is built by R66 and T67. K94 serves as a coordination point for L-aspartate. 3 residues coordinate carbamoyl phosphate: R116, H144, and Q147. L-aspartate is bound by residues R177 and R231. Residues G272 and P273 each contribute to the carbamoyl phosphate site.

Belongs to the aspartate/ornithine carbamoyltransferase superfamily. ATCase family. In terms of assembly, heterododecamer (2C3:3R2) of six catalytic PyrB chains organized as two trimers (C3), and six regulatory PyrI chains organized as three dimers (R2).

It catalyses the reaction carbamoyl phosphate + L-aspartate = N-carbamoyl-L-aspartate + phosphate + H(+). It participates in pyrimidine metabolism; UMP biosynthesis via de novo pathway; (S)-dihydroorotate from bicarbonate: step 2/3. Functionally, catalyzes the condensation of carbamoyl phosphate and aspartate to form carbamoyl aspartate and inorganic phosphate, the committed step in the de novo pyrimidine nucleotide biosynthesis pathway. The chain is Aspartate carbamoyltransferase catalytic subunit from Rhodopseudomonas palustris (strain BisB18).